A 482-amino-acid polypeptide reads, in one-letter code: MGLLAYLLVVLLILNVFFAAVTVFLERRDTSATWAWLLVLTFVPIFGFIIYLIFGRKLSGKKIFDWKGQEKIGIQESTANQIEMIRQKEFPFSDSNVKKHRDLIYLLLVNDGAILTQDNEVELFIDGHEKFDALIADIEKAKDHIHLIYYIFHSDELGNRLMRVLERKAAEGLNVKIIYDAMGSRTTKKSFFRTFEKNGGLVRPFFPSKLPLINFRLNYRNHRKLAIIDGDISYIGGFNIGDEYLGLSKKFGYWRDTHLRVHGKAVYAMQTRFIMDWNSASSTNKIDYKPRYFPTFHGKGHTSMQIVSSGPDSEWQQIKNGYIKMINAAKKTIYLQSPYFIPDASLLEAIKIAALSGVDVRVMIPNKPDHAFVYRATTNYAGELMETGAKIFIYDNGFIHAKTLVVDGEIASVGTANMDFRSFRLNFEVNAFIYEKKMVQKLEDAFLEDILKSYQLTPELYAKRSLWIKFKEAVSRLLSPIL.

The next 2 membrane-spanning stretches (helical) occupy residues 4–24 and 34–54; these read LAYLLVVLLILNVFFAAVTVF and WAWLLVLTFVPIFGFIIYLIF. PLD phosphodiesterase domains are found at residues 217 to 244 and 395 to 422; these read LNYRNHRKLAIIDGDISYIGGFNIGDEY and DNGFIHAKTLVVDGEIASVGTANMDFRS. Residues H222, K224, D229, H400, K402, and D407 contribute to the active site.

It belongs to the phospholipase D family. Cardiolipin synthase subfamily.

The protein localises to the cell membrane. It catalyses the reaction 2 a 1,2-diacyl-sn-glycero-3-phospho-(1'-sn-glycerol) = a cardiolipin + glycerol. Its function is as follows. Catalyzes the reversible phosphatidyl group transfer from one phosphatidylglycerol molecule to another to form cardiolipin (CL) (diphosphatidylglycerol) and glycerol. In Listeria welshimeri serovar 6b (strain ATCC 35897 / DSM 20650 / CCUG 15529 / CIP 8149 / NCTC 11857 / SLCC 5334 / V8), this protein is Cardiolipin synthase (cls).